Reading from the N-terminus, the 724-residue chain is Pesticidal crystal protein Cry11Ba (724 aa).

The protein belongs to the delta endotoxin family.

Its function is as follows. Promotes colloidosmotic lysis by binding to the midgut epithelial cells of mosquitos. Active on Aedes aegypti, Culex pipiens and Anopheles stephensi larvae. The sequence is that of Pesticidal crystal protein Cry11Ba (cry11Ba) from Bacillus thuringiensis subsp. jegathesan.